Reading from the N-terminus, the 106-residue chain is Putative cytochrome c oxidase subunit 7A3, mitochondrial (106 aa).

Residues 1 to 23 (MLWNLLALHQIGQRTISTASHRH) constitute a mitochondrion transit peptide.

Belongs to the cytochrome c oxidase VIIa family.

The protein localises to the mitochondrion inner membrane. The polypeptide is Putative cytochrome c oxidase subunit 7A3, mitochondrial (COX7A2P2) (Homo sapiens (Human)).